The sequence spans 118 residues: UPF0102 protein Lxx14785 (118 aa).

Belongs to the UPF0102 family.

This is UPF0102 protein Lxx14785 from Leifsonia xyli subsp. xyli (strain CTCB07).